The sequence spans 427 residues: Glutamate-1-semialdehyde 2,1-aminomutase 2 (427 aa).

Residue lysine 267 is modified to N6-(pyridoxal phosphate)lysine.

This sequence belongs to the class-III pyridoxal-phosphate-dependent aminotransferase family. HemL subfamily. As to quaternary structure, homodimer. Pyridoxal 5'-phosphate serves as cofactor.

It localises to the cytoplasm. It carries out the reaction (S)-4-amino-5-oxopentanoate = 5-aminolevulinate. It participates in porphyrin-containing compound metabolism; protoporphyrin-IX biosynthesis; 5-aminolevulinate from L-glutamyl-tRNA(Glu): step 2/2. The polypeptide is Glutamate-1-semialdehyde 2,1-aminomutase 2 (Staphylococcus haemolyticus (strain JCSC1435)).